Consider the following 348-residue polypeptide: Chlorophyll(ide) b reductase NOL, chloroplastic (348 aa).

The transit peptide at 1-61 directs the protein to the chloroplast; that stretch reads MATWSGFNVS…TRQNLTVTPS (61 aa). 84-108 contacts NAD(+); sequence ITGSTKGIGYALAREFLKAGDNVVI. Tyr-233 functions as the Proton acceptor in the catalytic mechanism.

This sequence belongs to the short-chain dehydrogenases/reductases (SDR) family. In terms of assembly, interacts with NCY1 to form a complex that acts as a chlorophyll b reductase. Interacts with HCAR, RCCR and the LHCII complex. Part of a SGR1-CCE-LHCII complex, which acts in chlorophyll breakdown.

It localises to the plastid. Its subcellular location is the chloroplast thylakoid membrane. It carries out the reaction 7(1)-hydroxychlorophyllide a + NAD(+) = chlorophyllide b + NADH + H(+). The catalysed reaction is 7(1)-hydroxychlorophyllide a + NADP(+) = chlorophyllide b + NADPH + H(+). Functionally, required for chlorophyll b degradation. Chlorophyll b, chlorophyllide b, pheophorbide b and pheophytin b can be used as substrates. Belongs to the chlorophyll catabolic enzymes (CCEs). The sequence is that of Chlorophyll(ide) b reductase NOL, chloroplastic (NOL) from Arabidopsis thaliana (Mouse-ear cress).